A 474-amino-acid polypeptide reads, in one-letter code: tRNA-2-methylthio-N(6)-dimethylallyladenosine synthase (474 aa).

Positions 3–120 constitute an MTTase N-terminal domain; sequence KKLHIKTWGC…LPDMIEQVRR (118 aa). [4Fe-4S] cluster is bound by residues Cys-12, Cys-49, Cys-83, Cys-157, Cys-161, and Cys-164. Residues 143–375 enclose the Radical SAM core domain; the sequence is RAEGPTAFVS…QDRITQQAMR (233 aa). In terms of domain architecture, TRAM spans 378–441; that stretch reads RHMMGTVQRI…TNSLRGKFIR (64 aa).

The protein belongs to the methylthiotransferase family. MiaB subfamily. As to quaternary structure, monomer. It depends on [4Fe-4S] cluster as a cofactor.

It localises to the cytoplasm. It carries out the reaction N(6)-dimethylallyladenosine(37) in tRNA + (sulfur carrier)-SH + AH2 + 2 S-adenosyl-L-methionine = 2-methylsulfanyl-N(6)-dimethylallyladenosine(37) in tRNA + (sulfur carrier)-H + 5'-deoxyadenosine + L-methionine + A + S-adenosyl-L-homocysteine + 2 H(+). In terms of biological role, catalyzes the methylthiolation of N6-(dimethylallyl)adenosine (i(6)A), leading to the formation of 2-methylthio-N6-(dimethylallyl)adenosine (ms(2)i(6)A) at position 37 in tRNAs that read codons beginning with uridine. This is tRNA-2-methylthio-N(6)-dimethylallyladenosine synthase from Shewanella sp. (strain MR-7).